The following is a 432-amino-acid chain: Trigger factor (432 aa).

The 86-residue stretch at 161–246 (EDRVTIDFTG…LKKVEERELP (86 aa)) folds into the PPIase FKBP-type domain.

The protein belongs to the FKBP-type PPIase family. Tig subfamily. As to quaternary structure, homodimer and monomer. In vivo most of the ribosomes are in complex with monomeric TF. Uncomplexed TF, however, is in a monomer-dimer equilibrium with approximately two thirds of TF existing in a dimeric state.

It is found in the cytoplasm. The catalysed reaction is [protein]-peptidylproline (omega=180) = [protein]-peptidylproline (omega=0). Involved in protein export. Acts as a chaperone by maintaining the newly synthesized protein in an open conformation. Functions as a peptidyl-prolyl cis-trans isomerase. The protein is Trigger factor of Shigella boydii serotype 4 (strain Sb227).